The primary structure comprises 4574 residues: E3 ubiquitin-protein ligase MYCBP2 (4574 aa).

2 disordered regions span residues 92–115 and 599–620; these read RGKKALSKKKLKRRQKVKSKVKTR and SASKGEDGESTKSRRQPKPYKP. RCC1 repeat units lie at residues 591 to 646, 690 to 746, 943 to 993, and 995 to 1051; these read DGSV…IVTK, SGEV…MMCQ, NGDV…VLLM, and GQVF…LRID. The span at 611 to 620 shows a compositional bias: basic residues; it reads SRRQPKPYKP. Cys-1733 and Cys-1850 are oxidised to a cystine. Disordered stretches follow at residues 1976–1998 and 2313–2332; these read APPTFNPNQSTDSTTGNQPEQGL and LQRLPGTSSNSATGTDLTFG. 2 stretches are compositionally biased toward polar residues: residues 1981–1998 and 2317–2328; these read NPNQSTDSTTGNQPEQGL and PGTSSNSATGTD. The Filamin repeat unit spans residues 2336–2417; that stretch reads APKLEATYEP…IHVTIDGIEI (82 aa). Disordered regions lie at residues 2613–2824, 2845–2922, 3085–3116, 3345–3365, and 3505–3526; these read GFDY…PSPH, SNDE…KQAM, SPGSSAILKKKENEKDSKKTKKEKKKKEKAEV, PGSNMKSMPPSLETSPITDSD, and FETEEEEDEENKGNKENLEQEK. Composition is skewed to basic and acidic residues over residues 2639–2663 and 2678–2688; these read HRQESRSSKTDSHSNRSVDQVKSKN and DTGKLRSDSHS. Polar residues predominate over residues 2716-2729; sequence NPGSRSSSPKQKTF. A compositionally biased stretch (low complexity) spans 2730–2745; it reads TSGRSSPSSTSSPRSS. 3 stretches are compositionally biased toward basic and acidic residues: residues 2761–2772, 2854–2864, and 2874–2883; these read VHLDPPRERSKS, SELHNAEEGSS, and PVKEELESRS. 2 stretches are compositionally biased toward basic residues: residues 2887–2900 and 3102–3111; these read VSRKTSSRHVRPKK and KKTKKEKKKK. The span at 3515–3526 shows a compositional bias: basic and acidic residues; it reads NKGNKENLEQEK. The DOC domain maps to 3617-3795; it reads FNISVQSGYE…SVAQQKNCEA (179 aa). Residues 3815-3841 form a disordered region; that stretch reads GDAEPTPEQEEKNLLSSPEGEDKAPSD. Zn(2+) contacts are provided by Cys-4324, Cys-4327, Cys-4342, His-4344, His-4347, Cys-4350, Cys-4371, Cys-4374, Cys-4440, and Cys-4443. The RING-type; atypical zinc finger occupies 4324 to 4375; it reads CMICFTEALSAAPAIQLDCSHVFHLQCTRRVLENRWLGPRITFGFMSCPICK. Residues 4435-4572 form a tandem cysteine domain region; that stretch reads YAYYVCFKCK…LGCGVCRNAH (138 aa). Cys-4454 is a catalytic residue. Zn(2+)-binding residues include Cys-4471, Cys-4474, Cys-4483, His-4486, Cys-4495, Cys-4498, and Cys-4499. Residue Cys-4506 is part of the active site. Residues Cys-4513, Cys-4516, Cys-4534, Cys-4548, His-4554, Cys-4565, and Cys-4568 each coordinate Zn(2+).

This sequence belongs to the RING-Cys relay (RCR) family. In terms of tissue distribution, widely expressed when the visual system begins developing. In the eye, expressed in all cells, including retinal ganglion cells, with no obvious gradient.

It localises to the nucleus. Its subcellular location is the cell projection. The protein resides in the axon. The protein localises to the cytoplasm. It is found in the cytoskeleton. It carries out the reaction [E2 ubiquitin-conjugating enzyme]-S-ubiquitinyl-L-cysteine + [acceptor protein]-L-threonine = [E2 ubiquitin-conjugating enzyme]-L-cysteine + [acceptor protein]-3-O-ubiquitinyl-L-threonine.. Its pathway is protein modification; protein ubiquitination. Atypical E3 ubiquitin-protein ligase which specifically mediates ubiquitination of threonine and serine residues on target proteins, instead of ubiquitinating lysine residues. Shows esterification activity towards both threonine and serine, with a preference for threonine, and acts via two essential catalytic cysteine residues that relay ubiquitin to its substrate via thioester intermediates. Interacts with the E2 enzymes UBE2D1, UBE2D3, UBE2E1 and UBE2L3. Plays a key role in neural development, probably by mediating ubiquitination of threonine residues on target proteins. Involved in different processes such as regulation of neurite outgrowth, synaptic growth, synaptogenesis and axon degeneration. Required in the visual system for correct fasciculation, targeting and mapping of retinal axons. Acts as a regulator of pteridine synthesis. May play a role in the regulation of the circadian clock gene expression. This Danio rerio (Zebrafish) protein is E3 ubiquitin-protein ligase MYCBP2.